The primary structure comprises 105 residues: MNTLFGKAKEEARVISPKSVDEYPEAPITLGTTLVNFTGDWRTFMPVIDESKCVKCYICWKFCPEPAIYIKEDGFVAIDYDYCKGCGICANECPTKAITMVREEK.

4Fe-4S ferredoxin-type domains lie at 44 to 73 and 74 to 103; these read FMPVIDESKCVKCYICWKFCPEPAIYIKED and GFVAIDYDYCKGCGICANECPTKAITMVRE. Residues cysteine 53, cysteine 56, cysteine 59, cysteine 63, cysteine 83, cysteine 86, cysteine 89, and cysteine 93 each contribute to the [4Fe-4S] cluster site.

In terms of assembly, heterotetramer of one alpha, one beta, one delta and one gamma chain. The cofactor is [4Fe-4S] cluster.

The catalysed reaction is 3-methyl-2-oxobutanoate + 2 oxidized [2Fe-2S]-[ferredoxin] + CoA = 2-methylpropanoyl-CoA + 2 reduced [2Fe-2S]-[ferredoxin] + CO2 + H(+). The sequence is that of Ketoisovalerate oxidoreductase subunit VorD (vorD) from Pyrococcus abyssi (strain GE5 / Orsay).